A 424-amino-acid chain; its full sequence is Histidine--tRNA ligase (424 aa).

The tract at residues 1–22 (MSYRRPKGTYDVYPGDAARQEP) is disordered.

Belongs to the class-II aminoacyl-tRNA synthetase family. In terms of assembly, homodimer.

It is found in the cytoplasm. The enzyme catalyses tRNA(His) + L-histidine + ATP = L-histidyl-tRNA(His) + AMP + diphosphate + H(+). The chain is Histidine--tRNA ligase from Rubrobacter xylanophilus (strain DSM 9941 / JCM 11954 / NBRC 16129 / PRD-1).